The following is a 713-amino-acid chain: MMSWWSSGANTALDEQIEKATSSSLEDIALNLEISDVIRSKTVPPKDAMRSLKKRIGHKNPNTQLSALELTDTCVKNGGQHFLVEIASREFIDNLVSLLKATGPAAVNADVRARILGLIQSWAAVTQGRVELSYIGEVYKTLQHEGFQFPPKVAVATSMIDSSAPPEWTDSDVCMRCRTPFTFTNRKHHCRNCGSCFDQQCSSKSIPLPHLGIMQPVRVDDGCYAKVTDKSRGSGGAGAGAGYDRKSPSLYSSFPHKNRSSSAMQPRSARVDDGFDEDLKKALAMSLEEVKSHSRNYAPASNGVANSGQSKVNGDSSATKTVEEEDDDLKAAIAASLADMEEQKKKHSAVLHEQTHSTEAASASTFVPPKNDYELTPVEAENINLFATLVDRLQTQPPGTILREPQIQELYDSIGTLRPKLARTYGETMSKHDTLLDLHAKLATVVRYYDRMLEERLSKAYGQRNFAGYNMHVPRQTSSPYPSLQGPSAPANVPGESFYTGQPQHDYAEPSRQPSYPPQASGAQQQFHQYAPPHQASQPSEGWQPSHTPAPAAQYAGQPPQQSTESTHSHSSAHNHQNLAAPSAPDQSLPTPTTDPAASYYFNQQQVSALQTPVSVPAEPVQSPYPNLQQQPPAQYQHSPAPQGQAQQQKPPQQPQQPYWQHSASQNTALPTNHQPWPQVPNRQSASYVQEPLPSAPQHAPQKPVVEEALIEL.

The VHS domain occupies 18 to 150 (EKATSSSLED…TLQHEGFQFP (133 aa)). The segment at 168–228 (WTDSDVCMRC…VDDGCYAKVT (61 aa)) adopts an FYVE-type; degenerate zinc-finger fold. The interval 230-270 (KSRGSGGAGAGAGYDRKSPSLYSSFPHKNRSSSAMQPRSAR) is disordered. One can recognise a UIM 1 domain in the interval 274–293 (GFDEDLKKALAMSLEEVKSH). Disordered regions lie at residues 294–326 (SRNY…EEED), 473–597 (VPRQ…TDPA), and 612–704 (TPVS…PQKP). Residues 303–320 (GVANSGQSKVNGDSSATK) are compositionally biased toward polar residues. One can recognise a UIM 2 domain in the interval 324–343 (EEDDDLKAAIAASLADMEEQ). 2 stretches are compositionally biased toward polar residues: residues 475–486 (RQTSSPYPSLQG) and 535–547 (QASQ…QPSH). Residues 549–578 (PAPAAQYAGQPPQQSTESTHSHSSAHNHQN) show a composition bias toward low complexity. Composition is skewed to polar residues over residues 585–597 (PDQS…TDPA) and 624–638 (PYPN…QYQH). A compositionally biased stretch (low complexity) spans 640 to 651 (PAPQGQAQQQKP). Over residues 659 to 688 (YWQHSASQNTALPTNHQPWPQVPNRQSASY) the composition is skewed to polar residues.

This sequence belongs to the VPS27 family. In terms of assembly, component of the ESCRT-0 complex composed of HSE1 and VPS27.

The protein localises to the endosome membrane. Its function is as follows. Component of the ESCRT-0 complex which is the sorting receptor for ubiquitinated cargo proteins at the multivesicular body (MVB) and recruits ESCRT-I to the MVB outer membrane. The chain is Vacuolar protein sorting-associated protein 27 (VPS27) from Pyricularia oryzae (strain 70-15 / ATCC MYA-4617 / FGSC 8958) (Rice blast fungus).